The sequence spans 180 residues: dCTP deaminase, dUMP-forming (180 aa).

DCTP-binding positions include 100 to 105 (RSSLGR), Asp-117, 125 to 127 (TLE), Gln-146, Tyr-160, and Gln-167. The active-site Proton donor/acceptor is the Glu-127.

It belongs to the dCTP deaminase family. As to quaternary structure, homotrimer.

The catalysed reaction is dCTP + 2 H2O = dUMP + NH4(+) + diphosphate. The protein operates within pyrimidine metabolism; dUMP biosynthesis; dUMP from dCTP: step 1/1. Functionally, bifunctional enzyme that catalyzes both the deamination of dCTP to dUTP and the hydrolysis of dUTP to dUMP without releasing the toxic dUTP intermediate. The sequence is that of dCTP deaminase, dUMP-forming from Persephonella marina (strain DSM 14350 / EX-H1).